Reading from the N-terminus, the 483-residue chain is Serine hydroxymethyltransferase, cytosolic (483 aa).

Lys257 is modified (N6-(pyridoxal phosphate)lysine).

The protein belongs to the SHMT family. In terms of assembly, homotetramer. Identified in complex with ABRAXAS2 and the other subunits of the BRISC complex, at least composed of ABRAXAS2, BRCC3/BRCC36, BABAM2 and BABAM1/NBA1. Pyridoxal 5'-phosphate is required as a cofactor.

It localises to the cytoplasm. The enzyme catalyses (6R)-5,10-methylene-5,6,7,8-tetrahydrofolate + glycine + H2O = (6S)-5,6,7,8-tetrahydrofolate + L-serine. It participates in one-carbon metabolism; tetrahydrofolate interconversion. Functionally, interconversion of serine and glycine. This Pongo abelii (Sumatran orangutan) protein is Serine hydroxymethyltransferase, cytosolic (SHMT1).